We begin with the raw amino-acid sequence, 263 residues long: MKGVVIFGIHHWGFSVRVPRTSAGGSSYIVPPITTILGALSRGYCSDYAVKNNVSCTKEFIDKFSSDLFWVTYGTEEHMLMPYSDLLREERVPYRQSKNRSLDHVSDWFGVSAFGKVYCENVNFSILLLLNKENSEFWSKLGWQIISLGTKESLVTITDVKVVDVEESSDEDIYTIYYIPAECLTNTEEFEVVNMPVKSVYELSSKPSIGVFSNFLVPRKTPFIGGKVKVKKSNVRGDICKVYKMADKYVITFKEGLEKWYSK.

Belongs to the CRISPR-associated protein Cas5 family. Subtype I-A/Apern subfamily. In terms of assembly, part of the aCascade ribonucleoprotein complex, minimally composed of Csa2 and Cas5a, which binds crRNA. Other possible components of aCascade in strain P1 are Cas6b (SSO1437) and Csa5 (SSO1443), while SSO1399, Cas5b (SSO1400) and SSO1401 have sometimes been seen weakly associated. Csa2 is probably the major RNA-binding subunit. The Csa2-Cas5a-crRNA complex also binds target DNA homologous to crRNA, probably forming an R-loop. Purified aCascade forms a filament about 6 nm in width.

Its function is as follows. CRISPR (clustered regularly interspaced short palindromic repeat) is an adaptive immune system that provides protection against mobile genetic elements (viruses, transposable elements and conjugative plasmids). CRISPR clusters contain spacers, sequences complementary to antecedent mobile elements, and target invading nucleic acids. CRISPR clusters are transcribed and processed into CRISPR RNA (crRNA). This Saccharolobus solfataricus (strain ATCC 35092 / DSM 1617 / JCM 11322 / P2) (Sulfolobus solfataricus) protein is CRISPR-associated protein Cas5 2 (cas5b).